A 321-amino-acid polypeptide reads, in one-letter code: Anthranilate phosphoribosyltransferase (321 aa).

5-phospho-alpha-D-ribose 1-diphosphate is bound by residues glycine 72, 75–76 (GD), threonine 80, 82–85 (NVST), 99–107 (KHGNVSITS), and serine 111. Anthranilate is bound at residue glycine 72. Residue serine 84 participates in Mg(2+) binding. Asparagine 102 serves as a coordination point for anthranilate. Arginine 157 provides a ligand contact to anthranilate. Residues aspartate 216 and glutamate 217 each coordinate Mg(2+).

The protein belongs to the anthranilate phosphoribosyltransferase family. As to quaternary structure, homodimer. Requires Mg(2+) as cofactor.

It catalyses the reaction N-(5-phospho-beta-D-ribosyl)anthranilate + diphosphate = 5-phospho-alpha-D-ribose 1-diphosphate + anthranilate. The protein operates within amino-acid biosynthesis; L-tryptophan biosynthesis; L-tryptophan from chorismate: step 2/5. Functionally, catalyzes the transfer of the phosphoribosyl group of 5-phosphorylribose-1-pyrophosphate (PRPP) to anthranilate to yield N-(5'-phosphoribosyl)-anthranilate (PRA). The polypeptide is Anthranilate phosphoribosyltransferase (Methanococcus maripaludis (strain C7 / ATCC BAA-1331)).